A 338-amino-acid chain; its full sequence is Ketol-acid reductoisomerase (NADP(+)) (338 aa).

Residues 1 to 181 (MQVYYDKDCD…GGGRTGIIET (181 aa)) enclose the KARI N-terminal Rossmann domain. Residues 24 to 27 (YGSQ), arginine 47, serine 50, serine 52, and 82 to 85 (DEFQ) contribute to the NADP(+) site. Histidine 107 is a catalytic residue. Glycine 133 lines the NADP(+) pocket. Residues 182 to 327 (TFKDETETDL…EKLRAMMPWI (146 aa)) enclose the KARI C-terminal knotted domain. Residues aspartate 190, glutamate 194, glutamate 226, and glutamate 230 each contribute to the Mg(2+) site. Position 251 (serine 251) interacts with substrate.

The protein belongs to the ketol-acid reductoisomerase family. Mg(2+) serves as cofactor.

The enzyme catalyses (2R)-2,3-dihydroxy-3-methylbutanoate + NADP(+) = (2S)-2-acetolactate + NADPH + H(+). It carries out the reaction (2R,3R)-2,3-dihydroxy-3-methylpentanoate + NADP(+) = (S)-2-ethyl-2-hydroxy-3-oxobutanoate + NADPH + H(+). Its pathway is amino-acid biosynthesis; L-isoleucine biosynthesis; L-isoleucine from 2-oxobutanoate: step 2/4. It participates in amino-acid biosynthesis; L-valine biosynthesis; L-valine from pyruvate: step 2/4. Involved in the biosynthesis of branched-chain amino acids (BCAA). Catalyzes an alkyl-migration followed by a ketol-acid reduction of (S)-2-acetolactate (S2AL) to yield (R)-2,3-dihydroxy-isovalerate. In the isomerase reaction, S2AL is rearranged via a Mg-dependent methyl migration to produce 3-hydroxy-3-methyl-2-ketobutyrate (HMKB). In the reductase reaction, this 2-ketoacid undergoes a metal-dependent reduction by NADPH to yield (R)-2,3-dihydroxy-isovalerate. The chain is Ketol-acid reductoisomerase (NADP(+)) from Teredinibacter turnerae (strain ATCC 39867 / T7901).